The primary structure comprises 477 residues: Bifunctional protein HldE (477 aa).

The tract at residues 1 to 318 (MKVTLSEFER…ENAVRGRADT (318 aa)) is ribokinase. Lys-179 is subject to N6-acetyllysine. Residue 195–198 (NLSE) participates in ATP binding. The active site involves Asp-264. The interval 344–477 (MTNGVFDILH…IKKIQQDKKG (134 aa)) is cytidylyltransferase.

In the N-terminal section; belongs to the carbohydrate kinase PfkB family. This sequence in the C-terminal section; belongs to the cytidylyltransferase family. As to quaternary structure, homodimer.

It carries out the reaction D-glycero-beta-D-manno-heptose 7-phosphate + ATP = D-glycero-beta-D-manno-heptose 1,7-bisphosphate + ADP + H(+). The enzyme catalyses D-glycero-beta-D-manno-heptose 1-phosphate + ATP + H(+) = ADP-D-glycero-beta-D-manno-heptose + diphosphate. It participates in nucleotide-sugar biosynthesis; ADP-L-glycero-beta-D-manno-heptose biosynthesis; ADP-L-glycero-beta-D-manno-heptose from D-glycero-beta-D-manno-heptose 7-phosphate: step 1/4. It functions in the pathway nucleotide-sugar biosynthesis; ADP-L-glycero-beta-D-manno-heptose biosynthesis; ADP-L-glycero-beta-D-manno-heptose from D-glycero-beta-D-manno-heptose 7-phosphate: step 3/4. Its function is as follows. Catalyzes the phosphorylation of D-glycero-D-manno-heptose 7-phosphate at the C-1 position to selectively form D-glycero-beta-D-manno-heptose-1,7-bisphosphate. Catalyzes the ADP transfer from ATP to D-glycero-beta-D-manno-heptose 1-phosphate, yielding ADP-D-glycero-beta-D-manno-heptose. The sequence is that of Bifunctional protein HldE from Shigella boydii serotype 18 (strain CDC 3083-94 / BS512).